A 277-amino-acid polypeptide reads, in one-letter code: Glutamate racemase (277 aa).

Substrate is bound by residues 13 to 14 and 45 to 46; these read DS and YG. C76 acts as the Proton donor/acceptor in catalysis. Substrate is bound at residue 77–78; sequence NT. C186 acts as the Proton donor/acceptor in catalysis. Substrate is bound at residue 187–188; the sequence is TH.

The protein belongs to the aspartate/glutamate racemases family.

It catalyses the reaction L-glutamate = D-glutamate. Its pathway is cell wall biogenesis; peptidoglycan biosynthesis. In terms of biological role, provides the (R)-glutamate required for cell wall biosynthesis. This is Glutamate racemase from Ralstonia nicotianae (strain ATCC BAA-1114 / GMI1000) (Ralstonia solanacearum).